The primary structure comprises 206 residues: GTP cyclohydrolase 1 (206 aa).

The Zn(2+) site is built by C95, H98, and C166.

The protein belongs to the GTP cyclohydrolase I family. In terms of assembly, toroid-shaped homodecamer, composed of two pentamers of five dimers.

The catalysed reaction is GTP + H2O = 7,8-dihydroneopterin 3'-triphosphate + formate + H(+). Its pathway is cofactor biosynthesis; 7,8-dihydroneopterin triphosphate biosynthesis; 7,8-dihydroneopterin triphosphate from GTP: step 1/1. This is GTP cyclohydrolase 1 from Bartonella quintana (strain Toulouse) (Rochalimaea quintana).